A 291-amino-acid polypeptide reads, in one-letter code: tRNA-cytidine(32) 2-sulfurtransferase (291 aa).

Residues 36 to 41 (SGGKDS) carry the PP-loop motif motif. Positions 111, 114, and 202 each coordinate [4Fe-4S] cluster. The interval 259–291 (DPWLDAEDEEAEDCGEPSAGDGVVSLGGARGGR) is disordered. The span at 262–273 (LDAEDEEAEDCG) shows a compositional bias: acidic residues.

It belongs to the TtcA family. In terms of assembly, homodimer. Mg(2+) is required as a cofactor. [4Fe-4S] cluster serves as cofactor.

It localises to the cytoplasm. It carries out the reaction cytidine(32) in tRNA + S-sulfanyl-L-cysteinyl-[cysteine desulfurase] + AH2 + ATP = 2-thiocytidine(32) in tRNA + L-cysteinyl-[cysteine desulfurase] + A + AMP + diphosphate + H(+). It functions in the pathway tRNA modification. Functionally, catalyzes the ATP-dependent 2-thiolation of cytidine in position 32 of tRNA, to form 2-thiocytidine (s(2)C32). The sulfur atoms are provided by the cysteine/cysteine desulfurase (IscS) system. This is tRNA-cytidine(32) 2-sulfurtransferase from Anaeromyxobacter sp. (strain K).